The primary structure comprises 484 residues: Nuclear rim protein 1 (484 aa).

Ser3 is modified (phosphoserine). A run of 2 helical transmembrane segments spans residues 145-165 and 252-272; these read FTIF…MFGY and TAIV…AIVF. The interval 416-457 is disordered; sequence SSNENLEKGGAFLPNQDQNRPSKSLSPLRKTPLSARQKRFEG. Residue Ser417 is modified to Phosphoserine. Positions 430-440 are enriched in polar residues; sequence NQDQNRPSKSL. The residue at position 474 (Ser474) is a Phosphoserine.

This sequence belongs to the NUR1 family. Interacts with CSM1.

The protein localises to the nucleus membrane. Member of a perinuclear network that controls recombination at multiple loci to maintain genome stability. Required for rDNA repeat stability. This is Nuclear rim protein 1 (NUR1) from Saccharomyces cerevisiae (strain Lalvin EC1118 / Prise de mousse) (Baker's yeast).